The sequence spans 485 residues: UDP-N-acetylmuramoyl-L-alanyl-D-glutamate--2,6-diaminopimelate ligase (485 aa).

UDP-N-acetyl-alpha-D-muramoyl-L-alanyl-D-glutamate is bound at residue Ser-30. 113–119 lines the ATP pocket; it reads GTNGKTT. UDP-N-acetyl-alpha-D-muramoyl-L-alanyl-D-glutamate-binding positions include 155-156, Ser-182, and Arg-190; that span reads TT. Lys-222 is subject to N6-carboxylysine. Meso-2,6-diaminopimelate is bound by residues Arg-381, 405-408, Gly-455, and Glu-459; that span reads DNPR. The short motif at 405-408 is the Meso-diaminopimelate recognition motif element; the sequence is DNPR.

The protein belongs to the MurCDEF family. MurE subfamily. Mg(2+) is required as a cofactor. In terms of processing, carboxylation is probably crucial for Mg(2+) binding and, consequently, for the gamma-phosphate positioning of ATP.

The protein resides in the cytoplasm. The catalysed reaction is UDP-N-acetyl-alpha-D-muramoyl-L-alanyl-D-glutamate + meso-2,6-diaminopimelate + ATP = UDP-N-acetyl-alpha-D-muramoyl-L-alanyl-gamma-D-glutamyl-meso-2,6-diaminopimelate + ADP + phosphate + H(+). Its pathway is cell wall biogenesis; peptidoglycan biosynthesis. In terms of biological role, catalyzes the addition of meso-diaminopimelic acid to the nucleotide precursor UDP-N-acetylmuramoyl-L-alanyl-D-glutamate (UMAG) in the biosynthesis of bacterial cell-wall peptidoglycan. The sequence is that of UDP-N-acetylmuramoyl-L-alanyl-D-glutamate--2,6-diaminopimelate ligase from Clostridium tetani (strain Massachusetts / E88).